A 401-amino-acid chain; its full sequence is tRNA(Met) cytidine acetate ligase (401 aa).

ATP contacts are provided by residues 7-20 (IVEY…HLYH), Gly102, Asn164, and Arg189.

The protein belongs to the TmcAL family.

The protein localises to the cytoplasm. The enzyme catalyses cytidine(34) in elongator tRNA(Met) + acetate + ATP = N(4)-acetylcytidine(34) in elongator tRNA(Met) + AMP + diphosphate. In terms of biological role, catalyzes the formation of N(4)-acetylcytidine (ac(4)C) at the wobble position of elongator tRNA(Met), using acetate and ATP as substrates. First activates an acetate ion to form acetyladenylate (Ac-AMP) and then transfers the acetyl group to tRNA to form ac(4)C34. This is tRNA(Met) cytidine acetate ligase from Thermoanaerobacter pseudethanolicus (strain ATCC 33223 / 39E) (Clostridium thermohydrosulfuricum).